Here is a 186-residue protein sequence, read N- to C-terminus: Ribosome-recycling factor (186 aa).

This sequence belongs to the RRF family.

The protein resides in the cytoplasm. Functionally, responsible for the release of ribosomes from messenger RNA at the termination of protein biosynthesis. May increase the efficiency of translation by recycling ribosomes from one round of translation to another. This Polynucleobacter asymbioticus (strain DSM 18221 / CIP 109841 / QLW-P1DMWA-1) (Polynucleobacter necessarius subsp. asymbioticus) protein is Ribosome-recycling factor.